The primary structure comprises 515 residues: MGSLGSDNIAELEANGSAFNLNPLDPEEFRRQGHMVIDFLADYYQNVHKYPVRSQVEPGYLKKILPESAPNQPESLETILDDITNHIVPGITHWMSPNYFAYFPASGSTAGFLGEMLSTGFNAVCFNWMSSPAATELETIVTDWLGKLLALPEKFLFSGGGGGVLQGTTCEAILCTMTAARDKVLNKIGKDQIGKLVVYGSDQTHCALQKAAQIAGIHPANFRAVRTFKSDAFGLNPEELRKVVSADVEAGLVPLYLCPTVGTTSSTAVDQLRGLCSVAEEHEMWVHVDAAYAGSACICPEFRHFIDGVEGATSFSFNAHKWFFTNLDCCCLWVREPQALINALSTNPEYLRNKATESQKVVDYKDWQIALSRRFRAMKLWMVMRSYGVANLRNFLRSHVKMAKLFEGLVSADERFEIVVPRNFAMVCFRFNPTKKDRATGPELDRINEFNRRLLEEVNSTGRLYMTHAVIGGEYVMRFATGATLTEEKHVRCAWRAIQEHAAALMEKIYYKQRN.

2 consecutive repeat copies span residues 81–138 and 141–192. The interval 81-192 is 2 X approximate tandem repeats; that stretch reads DDITNHIVPG…KVLNKIGKDQ (112 aa). Position 105 (alanine 105) interacts with substrate. Residues threonine 169 and cysteine 170 each contribute to the pyridoxal 5'-phosphate site. Histidine 205 serves as a coordination point for substrate. 2 residues coordinate pyridoxal 5'-phosphate: threonine 264 and asparagine 318. At lysine 321 the chain carries N6-(pyridoxal phosphate)lysine.

The protein belongs to the group II decarboxylase family. Requires pyridoxal 5'-phosphate as cofactor. As to expression, mostly expressed in bulbs, and, to a lower extent, in stems, roots, leaves and flowers.

It carries out the reaction L-tyrosine + H(+) = tyramine + CO2. Its pathway is alkaloid biosynthesis. In terms of biological role, catalyzes the decarboxylation of L-tyrosine to tyramine, which is converted to norbelladine, a precursor to all Amaryllidaceae alkaloids such as galanthamine, lycorine and haemanthamine, and including haemanthamine- and crinamine-type alkaloids, promising anticancer agents. The polypeptide is Tyrosine decarboxylase 1 (Narcissus pseudonarcissus (Daffodil)).